The following is a 106-amino-acid chain: Nucleoid-associated protein RPA0616 (106 aa).

The protein belongs to the YbaB/EbfC family. Homodimer.

The protein resides in the cytoplasm. It is found in the nucleoid. Binds to DNA and alters its conformation. May be involved in regulation of gene expression, nucleoid organization and DNA protection. The sequence is that of Nucleoid-associated protein RPA0616 from Rhodopseudomonas palustris (strain ATCC BAA-98 / CGA009).